Reading from the N-terminus, the 139-residue chain is MSATEQPQQQQQKLRWGIAWIYSSSNNTIITITDLTGAETVARVSGGMVVRADKDKPSPWAAMQAAYKAAQLALARGINAVHIKVRGPGGYGMKVPGPGASAAIRALARSGLIIGRIEDVTPIPHDTIRPPSGRKGRRV.

Belongs to the universal ribosomal protein uS11 family. As to quaternary structure, part of the 30S ribosomal subunit.

Its function is as follows. Located on the platform of the 30S subunit. The protein is Small ribosomal subunit protein uS11 of Pyrobaculum islandicum (strain DSM 4184 / JCM 9189 / GEO3).